The chain runs to 600 residues: NADH-quinone oxidoreductase subunit C/D (600 aa).

An NADH dehydrogenase I subunit C region spans residues 1–190; that stretch reads MVNNMTDLTA…SPFELTKAKQ (190 aa). Positions 214-600 are NADH dehydrogenase I subunit D; it reads DFMFLNLGPN…IDFVMSDVDR (387 aa).

The protein in the N-terminal section; belongs to the complex I 30 kDa subunit family. It in the C-terminal section; belongs to the complex I 49 kDa subunit family. NDH-1 is composed of 13 different subunits. Subunits NuoB, CD, E, F, and G constitute the peripheral sector of the complex.

Its subcellular location is the cell inner membrane. The enzyme catalyses a quinone + NADH + 5 H(+)(in) = a quinol + NAD(+) + 4 H(+)(out). Its function is as follows. NDH-1 shuttles electrons from NADH, via FMN and iron-sulfur (Fe-S) centers, to quinones in the respiratory chain. The immediate electron acceptor for the enzyme in this species is believed to be ubiquinone. Couples the redox reaction to proton translocation (for every two electrons transferred, four hydrogen ions are translocated across the cytoplasmic membrane), and thus conserves the redox energy in a proton gradient. The protein is NADH-quinone oxidoreductase subunit C/D of Escherichia coli (strain ATCC 8739 / DSM 1576 / NBRC 3972 / NCIMB 8545 / WDCM 00012 / Crooks).